A 651-amino-acid polypeptide reads, in one-letter code: Probable potassium transport system protein Kup (651 aa).

Transmembrane regions (helical) follow at residues 41-61 (LVLG…IYAF), 82-102 (VVSL…VLFV), 130-150 (LILG…VITP), 163-183 (IVAP…LVTL), 194-214 (VAIV…ASGL), 235-255 (FLTV…LAMT), 276-296 (WLWI…AFIL), 309-329 (MIPS…TVIA), 366-386 (IYIP…VLGF), 395-415 (AYGI…YIVM), 426-446 (ALPI…ANII), and 450-470 (EGGW…WTWV).

The protein belongs to the HAK/KUP transporter (TC 2.A.72) family.

Its subcellular location is the cell inner membrane. The enzyme catalyses K(+)(in) + H(+)(in) = K(+)(out) + H(+)(out). In terms of biological role, transport of potassium into the cell. Likely operates as a K(+):H(+) symporter. The protein is Probable potassium transport system protein Kup of Brucella canis (strain ATCC 23365 / NCTC 10854 / RM-666).